Reading from the N-terminus, the 616-residue chain is Chaperone protein HscA (616 aa).

Belongs to the heat shock protein 70 family.

Its function is as follows. Chaperone involved in the maturation of iron-sulfur cluster-containing proteins. Has a low intrinsic ATPase activity which is markedly stimulated by HscB. Involved in the maturation of IscU. The chain is Chaperone protein HscA from Escherichia fergusonii (strain ATCC 35469 / DSM 13698 / CCUG 18766 / IAM 14443 / JCM 21226 / LMG 7866 / NBRC 102419 / NCTC 12128 / CDC 0568-73).